Reading from the N-terminus, the 403-residue chain is Ribosomal RNA large subunit methyltransferase I (403 aa).

The PUA domain occupies 9-88; sequence YPRLVLSKGR…ESIDIAFFTR (80 aa).

This sequence belongs to the methyltransferase superfamily. RlmI family.

Its subcellular location is the cytoplasm. The catalysed reaction is cytidine(1962) in 23S rRNA + S-adenosyl-L-methionine = 5-methylcytidine(1962) in 23S rRNA + S-adenosyl-L-homocysteine + H(+). In terms of biological role, specifically methylates the cytosine at position 1962 (m5C1962) of 23S rRNA. The polypeptide is Ribosomal RNA large subunit methyltransferase I (Salmonella newport (strain SL254)).